The sequence spans 345 residues: GMP reductase 1 (345 aa).

Position 26-27 (26-27 (SR)) interacts with NADP(+). Ser-28 is modified (phosphoserine). Residues Lys-78, 129-131 (DVA), and 180-181 (VG) contribute to the NADP(+) site. The K(+) site is built by Gly-181, Gly-183, and Cys-186. The active-site Thioimidate intermediate is Cys-186. Thr-188 (proton donor/acceptor) is an active-site residue. Residue Arg-189 coordinates K(+). GMP is bound by residues 219-221 (DGG), 242-243 (GG), 268-270 (GMS), and 286-290 (RASEG). Residues Met-269, 285-286 (YR), and 314-317 (STCT) contribute to the NADP(+) site.

Belongs to the IMPDH/GMPR family. GuaC type 1 subfamily. In terms of assembly, homotetramer.

It catalyses the reaction IMP + NH4(+) + NADP(+) = GMP + NADPH + 2 H(+). Catalyzes the irreversible NADPH-dependent deamination of GMP to IMP. It functions in the conversion of nucleobase, nucleoside and nucleotide derivatives of G to A nucleotides, and in maintaining the intracellular balance of A and G nucleotides. In Mus musculus (Mouse), this protein is GMP reductase 1 (Gmpr).